A 130-amino-acid polypeptide reads, in one-letter code: UPF0102 protein Cthe_0758 (130 aa).

The protein belongs to the UPF0102 family.

This Acetivibrio thermocellus (strain ATCC 27405 / DSM 1237 / JCM 9322 / NBRC 103400 / NCIMB 10682 / NRRL B-4536 / VPI 7372) (Clostridium thermocellum) protein is UPF0102 protein Cthe_0758.